A 432-amino-acid polypeptide reads, in one-letter code: Adenylosuccinate synthetase (432 aa).

Residues 12 to 18 (GDEGKGK) and 40 to 42 (GHT) each bind GTP. The Proton acceptor role is filled by Asp-13. Residues Asp-13 and Gly-40 each contribute to the Mg(2+) site. IMP contacts are provided by residues 13-16 (DEGK), 38-41 (NAGH), Thr-130, Arg-144, Gln-225, Thr-240, and Arg-304. Catalysis depends on His-41, which acts as the Proton donor. 300–306 (ATTGRRR) contacts substrate. Residues Arg-306, 332-334 (KLD), and 415-417 (SVG) contribute to the GTP site.

It belongs to the adenylosuccinate synthetase family. Homodimer. The cofactor is Mg(2+).

Its subcellular location is the cytoplasm. It catalyses the reaction IMP + L-aspartate + GTP = N(6)-(1,2-dicarboxyethyl)-AMP + GDP + phosphate + 2 H(+). It functions in the pathway purine metabolism; AMP biosynthesis via de novo pathway; AMP from IMP: step 1/2. Functionally, plays an important role in the de novo pathway of purine nucleotide biosynthesis. Catalyzes the first committed step in the biosynthesis of AMP from IMP. This Syntrophus aciditrophicus (strain SB) protein is Adenylosuccinate synthetase.